The primary structure comprises 179 residues: MTFVLSSSIERLKEKIRTIPDFPRPGVMFKDITPAIGEGQFFRLILTIFIARYQKKKIDKIAAIDARGFIFAGALAHALGVGIIPIRKKGKLPYKTYELHYKSEYGEEVLTIHQDAISKGENILIVDDVLATGNTARTAALLVEKCGGNLMELGFLAELSNLKGRERLFPFPCYSILQF.

The protein belongs to the purine/pyrimidine phosphoribosyltransferase family. As to quaternary structure, homodimer.

Its subcellular location is the cytoplasm. It carries out the reaction AMP + diphosphate = 5-phospho-alpha-D-ribose 1-diphosphate + adenine. Its pathway is purine metabolism; AMP biosynthesis via salvage pathway; AMP from adenine: step 1/1. Catalyzes a salvage reaction resulting in the formation of AMP, that is energically less costly than de novo synthesis. The chain is Adenine phosphoribosyltransferase from Methylacidiphilum infernorum (isolate V4) (Methylokorus infernorum (strain V4)).